The primary structure comprises 105 residues: Large ribosomal subunit protein uL24 (105 aa).

It belongs to the universal ribosomal protein uL24 family. As to quaternary structure, part of the 50S ribosomal subunit.

Functionally, one of two assembly initiator proteins, it binds directly to the 5'-end of the 23S rRNA, where it nucleates assembly of the 50S subunit. One of the proteins that surrounds the polypeptide exit tunnel on the outside of the subunit. The protein is Large ribosomal subunit protein uL24 of Xylella fastidiosa (strain M23).